A 115-amino-acid chain; its full sequence is Migration and invasion enhancer 1 (115 aa).

The segment covering methionine 1–valine 10 has biased composition (polar residues). Residues methionine 1–glycine 22 form a disordered region. Serine 2 carries the post-translational modification N-acetylserine. Cysteine 30 and cysteine 33 are disulfide-bonded. Residue cysteine 112 is the site of S-geranylgeranyl cysteine attachment. The propeptide at valine 113–leucine 115 is removed in mature form.

The protein belongs to the SelWTH family. In terms of assembly, interacts with GPX1. Isoprenylation facilitates association with the plasma membrane and enhances the migratory phenotype of cells by inducing increased filopodia formation.

The protein localises to the cytoplasm. Its subcellular location is the cytosol. It localises to the cell membrane. Functionally, increases cell migration by inducing filopodia formation at the leading edge of migrating cells. Plays a role in regulation of apoptosis, possibly through control of CASP3. May be involved in a redox-related process. In Bos taurus (Bovine), this protein is Migration and invasion enhancer 1 (MIEN1).